Reading from the N-terminus, the 115-residue chain is Large ribosomal subunit protein uL22 (115 aa).

The protein belongs to the universal ribosomal protein uL22 family. In terms of assembly, part of the 50S ribosomal subunit.

In terms of biological role, this protein binds specifically to 23S rRNA; its binding is stimulated by other ribosomal proteins, e.g. L4, L17, and L20. It is important during the early stages of 50S assembly. It makes multiple contacts with different domains of the 23S rRNA in the assembled 50S subunit and ribosome. Its function is as follows. The globular domain of the protein is located near the polypeptide exit tunnel on the outside of the subunit, while an extended beta-hairpin is found that lines the wall of the exit tunnel in the center of the 70S ribosome. The protein is Large ribosomal subunit protein uL22 of Coxiella burnetii (strain CbuK_Q154) (Coxiella burnetii (strain Q154)).